We begin with the raw amino-acid sequence, 249 residues long: Putative NAD(+)--arginine ADP-ribosyltransferase Vis (249 aa).

The signal sequence occupies residues 1–18 (MNTRFLLLLCCLSFTTFS). Positions 31–223 (EEEVTQLAED…IGVETVKASA (193 aa)) constitute a TR mART core domain. NAD(+) contacts are provided by residues 68–80 (SISG…DYLR), 117–120 (RGTW), and E137. R117 is an active-site residue. Residues S142 and E191 contribute to the active site. Residue E191 coordinates NAD(+).

Belongs to the Arg-specific ADP-ribosyltransferase family.

Its subcellular location is the secreted. The enzyme catalyses L-arginyl-[protein] + NAD(+) = N(omega)-(ADP-D-ribosyl)-L-arginyl-[protein] + nicotinamide + H(+). A probable mono(ADP-ribosyl)transferase, it may ADP-ribosylate Arg in target protein(s). Upon expression in yeast cells causes cell death. The polypeptide is Putative NAD(+)--arginine ADP-ribosyltransferase Vis (Vibrio splendidus (strain 12B01)).